Consider the following 168-residue polypeptide: uncharacterized protein (168 aa).

Transmembrane regions (helical) follow at residues 4 to 24 (IIAL…PEEE) and 94 to 114 (IMVG…GFAW).

This sequence to A.aeolicus aq_1446.

Its subcellular location is the cell membrane. This is an uncharacterized protein from Aquifex aeolicus (strain VF5).